The sequence spans 65 residues: Transcriptional regulatory protein SenS (65 aa).

The H-T-H motif DNA-binding region spans 11–31; it reads RFRKRKTYGNQILPLELLIEK.

To B.natto SenN.

Functionally, regulates the expression of extracellular-protein genes of Bacillus subtilis. The protein is Transcriptional regulatory protein SenS (senS) of Bacillus subtilis (strain 168).